A 122-amino-acid chain; its full sequence is Large ribosomal subunit protein uL14 (122 aa).

Belongs to the universal ribosomal protein uL14 family. In terms of assembly, part of the 50S ribosomal subunit. Forms a cluster with proteins L3 and L19. In the 70S ribosome, L14 and L19 interact and together make contacts with the 16S rRNA in bridges B5 and B8.

Binds to 23S rRNA. Forms part of two intersubunit bridges in the 70S ribosome. This Magnetococcus marinus (strain ATCC BAA-1437 / JCM 17883 / MC-1) protein is Large ribosomal subunit protein uL14.